The primary structure comprises 1041 residues: Desmoglein-4 (1041 aa).

Positions 1 to 23 (MDWLLFRNICLLILFMVVLGVNS) are cleaved as a signal peptide. Residues 24–49 (EFIVEVKELDIENGTTTWQTVRRQKR) constitute a propeptide that is removed on maturation. 4 consecutive Cadherin domains span residues 50–157 (EWIK…PPVF), 158–269 (TQNV…FPIL), 270–385 (EKTS…GPTF), and 389–497 (SMTF…CPVI). The Extracellular portion of the chain corresponds to 50–634 (EWIKFAAACR…RQSNVGLGPA (585 aa)). An N-linked (GlcNAc...) asparagine glycan is attached at asparagine 110. An N-linked (GlcNAc...) asparagine glycan is attached at asparagine 545. The chain crosses the membrane as a helical span at residues 635-655 (GIGMIILGLLLLLLSPLLLLM). At 656–1041 (CCCKRRQPEG…RYSNMHYSRQ (386 aa)) the chain is on the cytoplasmic side. 2 Desmoglein repeat repeats span residues 884-910 (TLSE…IVTE) and 911-941 (TYTT…ETVM). The tract at residues 1014–1041 (ISQTTGSTSPMTSQHRVTRYSNMHYSRQ) is disordered.

Interacts with JUP. Strongly expressed in the skin; during the anagen stage of hair follicles in the matrix, precortex and inner rooth sheath.

It localises to the cell membrane. Its subcellular location is the cell junction. The protein localises to the desmosome. Its function is as follows. A component of desmosome cell-cell junctions which are required for positive regulation of cellular adhesion. Coordinates the transition from proliferation to differentiation in hair follicle keratinocytes. Plays a role in moderating lymphocyte migration to inflamed skin and maintaining homeostasis of the epidermal inflammatory response. This chain is Desmoglein-4 (Dsg4), found in Mus musculus (Mouse).